Consider the following 249-residue polypeptide: Metallo-beta-lactamase type 2 (249 aa).

The N-terminal stretch at 1–22 (MMKKMKWALVLALGLTGLNAFG) is a signal peptide. His-98, His-100, Asp-102, His-161, and Cys-180 together coordinate Zn(2+). Lys-183 contacts substrate. His-222 serves as a coordination point for Zn(2+).

The protein belongs to the metallo-beta-lactamase superfamily. Class-B beta-lactamase family. As to quaternary structure, monomer. Requires Zn(2+) as cofactor.

The protein localises to the periplasm. It carries out the reaction a beta-lactam + H2O = a substituted beta-amino acid. Functionally, confers resistance to the different beta-lactams antibiotics (penicillin, cephalosporin and carbapenem) via the hydrolysis of the beta-lactam ring. This chain is Metallo-beta-lactamase type 2 (blaB4), found in Elizabethkingia meningoseptica (Chryseobacterium meningosepticum).